The chain runs to 52 residues: Protein PROPEP914 (52 aa).

The tract at residues 25–52 is disordered; it reads DKPQDDMPQTPNSQVTIVSRDHPRGGNY. Positions 31-41 are enriched in polar residues; it reads MPQTPNSQVTI. The segment covering 43-52 has biased composition (basic and acidic residues); it reads SRDHPRGGNY.

Expressed in roots. Barely detected in flowers.

In terms of biological role, produces a rapid alkalinization of the cellular media and the induction of defense-related genes, including chitinase 1b, chalcone synthase and CYP93A1. Not active in tobacco or Arabidopsis. The receptor for GmPep914 is probably different from the receptor for GmSubPep. This Glycine max (Soybean) protein is Protein PROPEP914 (PROPEP914).